A 128-amino-acid polypeptide reads, in one-letter code: Large ribosomal subunit protein bL12 (128 aa).

This sequence belongs to the bacterial ribosomal protein bL12 family. As to quaternary structure, homodimer. Part of the ribosomal stalk of the 50S ribosomal subunit. Forms a multimeric L10(L12)X complex, where L10 forms an elongated spine to which 2 to 4 L12 dimers bind in a sequential fashion. Binds GTP-bound translation factors.

Its function is as follows. Forms part of the ribosomal stalk which helps the ribosome interact with GTP-bound translation factors. Is thus essential for accurate translation. The sequence is that of Large ribosomal subunit protein bL12 from Streptomyces antibioticus.